The following is a 217-amino-acid chain: Proteasome subunit beta type-6-A like protein (217 aa).

Positions 1 to 16 (MERHLMDSQIKGVSTG) are cleaved as a propeptide — removed in mature form. Thr17 serves as the catalytic Nucleophile.

It belongs to the peptidase T1B family. The 26S proteasome consists of a 20S proteasome core and two 19S regulatory subunits. The 20S proteasome core is composed of 28 subunits that are arranged in four stacked rings, resulting in a barrel-shaped structure. The two end rings are each formed by seven alpha subunits, and the two central rings are each formed by seven beta subunits. The catalytic chamber with the active sites is on the inside of the barrel.

It is found in the cytoplasm. The protein localises to the nucleus. It catalyses the reaction Cleavage of peptide bonds with very broad specificity.. The proteasome is a multicatalytic proteinase complex which is characterized by its ability to cleave peptides with Arg, Phe, Tyr, Leu, and Glu adjacent to the leaving group at neutral or slightly basic pH. The proteasome has an ATP-dependent proteolytic activity. This subunit is involved in antigen processing to generate class I binding peptides. The sequence is that of Proteasome subunit beta type-6-A like protein (psmb6l-a) from Salmo salar (Atlantic salmon).